The sequence spans 575 residues: Glycosyltransferase family 92 protein At1g27200 (575 aa).

A helical transmembrane segment spans residues 22–44 (FLSQRYLILCFCCFFVLLFFLSS). Residues 293-540 (LCVCTMLWNQ…TEAIEPPDWK (248 aa)) enclose the GT92 domain.

Belongs to the glycosyltransferase 92 family.

It is found in the membrane. In Arabidopsis thaliana (Mouse-ear cress), this protein is Glycosyltransferase family 92 protein At1g27200.